Reading from the N-terminus, the 465-residue chain is Opioid growth factor receptor-like protein 1 (465 aa).

Disordered stretches follow at residues 1 to 89 (MGNL…GNAK) and 309 to 465 (ENFI…TSSG). Basic and acidic residues-rich tracts occupy residues 48–59 (REQPEQPPERAG), 316–325 (PKKEQPERSK), 363–396 (TVEEKKVASREPGEETDKPSPEASSEDTKPRNSE), and 426–440 (SEKDGEGENQSKDSE). Over residues 442 to 465 (PENTSCHAEVVSQQNVTNPQTSSG) the composition is skewed to polar residues.

It belongs to the opioid growth factor receptor family.

This chain is Opioid growth factor receptor-like protein 1 (Ogfrl1), found in Rattus norvegicus (Rat).